The sequence spans 407 residues: Protein trichome birefringence-like 12 (407 aa).

A helical; Signal-anchor for type II membrane protein membrane pass occupies residues 21-41 (SLLPRILLLSLLLLLFYSLIL). Positions 130–132 (GDS) match the GDS motif motif. Residues 379 to 393 (DCMHWCLPGVPDTWV) carry the DCXHWCLPGXXDXWN motif motif.

This sequence belongs to the PC-esterase family. TBL subfamily.

It localises to the membrane. May act as a bridging protein that binds pectin and other cell wall polysaccharides. Probably involved in maintaining esterification of pectins. May be involved in the specific O-acetylation of cell wall polymers. This chain is Protein trichome birefringence-like 12 (TBL12), found in Arabidopsis thaliana (Mouse-ear cress).